The chain runs to 191 residues: Small ribosomal subunit protein eS7 (191 aa).

N-acetylmethionine is present on methionine 1.

Belongs to the eukaryotic ribosomal protein eS7 family.

The chain is Small ribosomal subunit protein eS7 (RPS7) from Brassica oleracea (Wild cabbage).